The primary structure comprises 332 residues: T-cell surface glycoprotein CD1b2 (332 aa).

An N-terminal signal peptide occupies residues 1–17 (MLLLVLALLAVLFPAGD). The Extracellular segment spans residues 18 to 301 (TQDAFPEPIS…ILYWGNSSIG (284 aa)). N-linked (GlcNAc...) asparagine glycosylation is found at N38, N75, and N146. Cystine bridges form between C120–C184, C149–C163, and C224–C279. Residues 185 to 295 (PRYLMSVLEA…LGGQDIILYW (111 aa)) enclose the Ig-like domain. A glycan (N-linked (GlcNAc...) asparagine) is linked at N297. Residues 302–322 (WIILAVFVSCLIVLLFYVLWF) traverse the membrane as a helical segment. Residues 323-332 (YKHWSYQDIL) lie on the Cytoplasmic side of the membrane. The short motif at 328–331 (YQDI) is the Internalization signal element.

As to quaternary structure, heterodimer with B2M (beta-2-microglobulin). Interacts with saposin C.

It is found in the cell membrane. It localises to the endosome membrane. The protein localises to the lysosome membrane. Functionally, antigen-presenting protein that binds self and non-self lipid and glycolipid antigens and presents them to T-cell receptors on natural killer T-cells. The sequence is that of T-cell surface glycoprotein CD1b2 (CD1B2) from Cavia porcellus (Guinea pig).